Consider the following 400-residue polypeptide: Sensory histidine kinase/phosphatase NtrB (400 aa).

Low complexity-rich tracts occupy residues 1–10 (MARASAAAPL) and 18–27 (RAPSSSYRPV). Positions 1-27 (MARASAAAPLPRRPARPRAPSSSYRPV) are disordered. One can recognise a PAS domain in the interval 29 to 99 (PCIDPSVMLN…IEQVQQGRHR (71 aa)). The Histidine kinase domain maps to 163 to 381 (MLGHEVKNPL…VFKVSLPMFD (219 aa)). Position 166 is a phosphohistidine; by autocatalysis (histidine 166).

Post-translationally, autophosphorylated.

It is found in the cytoplasm. The enzyme catalyses ATP + protein L-histidine = ADP + protein N-phospho-L-histidine.. Functionally, member of the two-component regulatory system NtrB/NtrC, which controls expression of the nitrogen-regulated (ntr) genes in response to nitrogen limitation. Under conditions of nitrogen limitation, NtrB autophosphorylates and transfers the phosphoryl group to NtrC. In the presence of nitrogen, acts as a phosphatase that dephosphorylates and inactivates NtrC. The polypeptide is Sensory histidine kinase/phosphatase NtrB (Azospirillum brasilense).